Consider the following 185-residue polypeptide: Prenylated Rab acceptor protein 1 (185 aa).

Over 1–78 (MAAEKDQQKD…RNVEYYQSNY (78 aa)) the chain is Cytoplasmic. The tract at residues 30–54 (AGRERLERRRATIRPWSSFVDQRRF) is required for interaction with prenylated RAB3A and VAMP2. Helical transmembrane passes span 79–94 (VFVF…VTSP) and 95–112 (MLLV…ILYL). The Cytoplasmic segment spans residues 113 to 131 (RTLQSKFVLFGREVSPAHQ). 2 consecutive transmembrane segments (helical) span residues 132–148 (YALA…LAGA) and 149–165 (GSAV…VIGS). A required for interaction with GDI1 region spans residues 165 to 185 (SHAAFHQMEAVDGEELQMEPV). Over 166-185 (HAAFHQMEAVDGEELQMEPV) the chain is Cytoplasmic. The required for interaction with prenylated RAB3A and VAMP2 stretch occupies residues 175–185 (VDGEELQMEPV). The homodimerization stretch occupies residues 175 to 185 (VDGEELQMEPV).

This sequence belongs to the PRA1 family. As to quaternary structure, homodimer. Interacts with VAMP2 (synaptobrevin-2), prenylated Rab proteins, GDI1, NDRG1 and PCLO.

It is found in the cell membrane. The protein localises to the cytoplasm. Its subcellular location is the golgi apparatus. The protein resides in the cytoplasmic vesicle. It localises to the secretory vesicle. It is found in the synaptic vesicle. General Rab protein regulator required for vesicle formation from the Golgi complex. May control vesicle docking and fusion by mediating the action of Rab GTPases to the SNARE complexes. In addition it inhibits the removal of Rab GTPases from the membrane by GDI1. This Canis lupus familiaris (Dog) protein is Prenylated Rab acceptor protein 1 (RABAC1).